Consider the following 514-residue polypeptide: Cytochrome P450 monooxygenase nodJ (514 aa).

The chain crosses the membrane as a helical span at residues 2–24 (ELIVIIITLAFCILLYGTRWRAA). 3 N-linked (GlcNAc...) asparagine glycosylation sites follow: Asn144, Asn245, and Asn416. Cys432 contributes to the heme binding site.

The protein belongs to the cytochrome P450 family. The cofactor is heme.

Its subcellular location is the membrane. It functions in the pathway secondary metabolite biosynthesis. Its function is as follows. Cytochrome P450 monooxygenase; part of the gene cluster that mediates the biosynthesis of the indole diterpenes nodulisporic acids (NA). Nodulisporic acid A (NAA) and its chemically modified derivatives are of particular significance because of their highly potent insecticidal activity against blood-feeding arthropods and lack of observable adverse effects on mammals, in particular the tremogenicity associated with the paspaline-derived IDTs is not observed. The geranylgeranyl diphosphate (GGPP) synthase ggs1, localized outside of the cluster, is proposed to catalyze the first step in nodulisporic acid biosynthesis via conversion of farnesyl pyrophosphate and isopentyl pyrophosphate into geranylgeranyl pyrophosphate (GGPP). Condensation of indole-3-glycerol phosphate with GGPP by the prenyl transferase nodC then forms 3-geranylgeranylindole (3-GGI). Epoxidation by the FAD-dependent monooxygenase nodM leads to a single-epoxidized-GGI that is substrate of the terpene cyclase nodB for cyclization to yield emindole SB. The terminal methyl carbon, C28, of emindole SB is then oxidized by the cytochrome P450 monooxygenase nodW to produce nodulisporic acid F (NAF), the pentacyclic core of NAA. NAF is converted to nodulisporic acid E (NAE) via prenylation. This step is probably performed by one of the indole diterpene prenyltransferases nodD1 or nodD2. Several oxidation steps performed by the FAD-linked oxidoreductase nodO and one of the cytochrome P450 monooxygenase nodR, nodX or nodZ further convert NAE to nodulisporic acid D (NAD). NAD is substrate of cytochrome P450 monooxygenase nodJ to produce the precursor of nodulisporic acid C (NAC), converted to NAC by one of the indole diterpene prenyltransferases nodD1 or nodD2. The FAD-dependent monooxygenase nodY2 then oxidizes NAC to nodulisporic acid B (NAB). Finally NAB is converted to NAA by one of the cytochrome P450 monooxygenases nodR, nodX or nodZ. The protein is Cytochrome P450 monooxygenase nodJ of Hypoxylon pulicicidum.